Reading from the N-terminus, the 390-residue chain is Formate-dependent phosphoribosylglycinamide formyltransferase (390 aa).

Residues 14–15 and E74 contribute to the N(1)-(5-phospho-beta-D-ribosyl)glycinamide site; that span reads EL. Residues R106, K147, 152-157, 187-190, and E195 each bind ATP; these read SSGKGQ and EQFI. One can recognise an ATP-grasp domain in the interval 111-304; sequence DLAAQELGIT…EFDLHARAIM (194 aa). 2 residues coordinate Mg(2+): E263 and E275. N(1)-(5-phospho-beta-D-ribosyl)glycinamide is bound by residues D282, K351, and 358-359; that span reads RR.

Belongs to the PurK/PurT family. Homodimer.

The enzyme catalyses N(1)-(5-phospho-beta-D-ribosyl)glycinamide + formate + ATP = N(2)-formyl-N(1)-(5-phospho-beta-D-ribosyl)glycinamide + ADP + phosphate + H(+). It participates in purine metabolism; IMP biosynthesis via de novo pathway; N(2)-formyl-N(1)-(5-phospho-D-ribosyl)glycinamide from N(1)-(5-phospho-D-ribosyl)glycinamide (formate route): step 1/1. In terms of biological role, involved in the de novo purine biosynthesis. Catalyzes the transfer of formate to 5-phospho-ribosyl-glycinamide (GAR), producing 5-phospho-ribosyl-N-formylglycinamide (FGAR). Formate is provided by PurU via hydrolysis of 10-formyl-tetrahydrofolate. This is Formate-dependent phosphoribosylglycinamide formyltransferase from Erythrobacter litoralis (strain HTCC2594).